A 98-amino-acid polypeptide reads, in one-letter code: NADH-ubiquinone oxidoreductase chain 4L (98 aa).

3 helical membrane-spanning segments follow: residues 1-21, 29-49, and 61-81; these read MSLT…GLLL, SLLC…MTIL, and IILL…LVMV.

Belongs to the complex I subunit 4L family. In terms of assembly, core subunit of respiratory chain NADH dehydrogenase (Complex I) which is composed of 45 different subunits.

Its subcellular location is the mitochondrion inner membrane. It catalyses the reaction a ubiquinone + NADH + 5 H(+)(in) = a ubiquinol + NAD(+) + 4 H(+)(out). In terms of biological role, core subunit of the mitochondrial membrane respiratory chain NADH dehydrogenase (Complex I) which catalyzes electron transfer from NADH through the respiratory chain, using ubiquinone as an electron acceptor. Part of the enzyme membrane arm which is embedded in the lipid bilayer and involved in proton translocation. This chain is NADH-ubiquinone oxidoreductase chain 4L (MT-ND4L), found in Vampyrodes caraccioli (Great stripe-faced bat).